The sequence spans 795 residues: Nucleolar complex protein 3 homolog (795 aa).

3 disordered regions span residues 1–88, 124–144, and 168–190; these read MKPM…PLDM, RDDV…EPEK, and IPSE…EVPE. Composition is skewed to basic and acidic residues over residues 22–39 and 46–58; these read LKLD…ESSA and QKQL…DVRS. The segment covering 74–88 has biased composition (acidic residues); sequence EEEYEVEEESLPLDM. The span at 171 to 181 shows a compositional bias: acidic residues; sequence EEQEENEEEMD. Positions 447–492 form a coiled coil; the sequence is SYKDKKKNLSRMQRKWKKAEEKLERELLEAEASESKEKKLKLNTET.

It belongs to the CBF/MAK21 family.

It is found in the nucleus. Its subcellular location is the nucleolus. This chain is Nucleolar complex protein 3 homolog (noc3l), found in Xenopus laevis (African clawed frog).